A 259-amino-acid chain; its full sequence is Cell division protein FtsQ (259 aa).

The Cytoplasmic segment spans residues 1 to 15 (MTRDQTATFGRHALR). A helical membrane pass occupies residues 16-36 (VAGSGLLVAGVVALGLLGWQW). The Periplasmic segment spans residues 37–259 (RANVTVDRVA…VVTRTRPLDG (223 aa)). The POTRA domain occupies 40 to 109 (VTVDRVAVTG…GALTISVTER (70 aa)).

This sequence belongs to the FtsQ/DivIB family. FtsQ subfamily.

The protein localises to the cell inner membrane. Its function is as follows. Essential cell division protein. This chain is Cell division protein FtsQ, found in Salinibacter ruber (strain DSM 13855 / M31).